We begin with the raw amino-acid sequence, 190 residues long: MSLFEDLINSKIRELEDLKRNLLVNIETNIRREADAALSKFSAQLANVESEATLERERIIYNAVVEARRKIAEVYDQMLKDLVNAVYEEVDKMRGAERYVKFLTSLLETAEKYVQTKDVVIYASPKDKGVVEAVARNLGLTGIVAEKDIRGGVVVTTRDGSITVDYSLESLIANKIEELKHLLYQMTYER.

The protein belongs to the V-ATPase E subunit family. As to quaternary structure, has multiple subunits with at least A(3), B(3), C, D, E, F, H, I and proteolipid K(x).

Its subcellular location is the cell membrane. Functionally, component of the A-type ATP synthase that produces ATP from ADP in the presence of a proton gradient across the membrane. In Pyrobaculum neutrophilum (strain DSM 2338 / JCM 9278 / NBRC 100436 / V24Sta) (Thermoproteus neutrophilus), this protein is A-type ATP synthase subunit E.